The following is a 264-amino-acid chain: Glycerol uptake facilitator protein (264 aa).

Residues 1-3 (MDK) lie on the Cytoplasmic side of the membrane. The helical transmembrane segment at 4–32 (SLKANCIGEFLGTALLIFFGVGCVAALKV) threads the bilayer. Residues 33 to 37 (AGASF) are Periplasmic-facing. A helical transmembrane segment spans residues 38-58 (GLWEISIMWGMGVALAVYATA). Residues 59–61 (GLS) are Cytoplasmic-facing. An intramembrane segment occupies 62 to 65 (GAHL). The NPA 1 signature appears at 66-68 (NPA). Residues 66–76 (NPAVTIALWKF) constitute an intramembrane region (helical). Residues 77-82 (ACFDGK) are Cytoplasmic-facing. A helical transmembrane segment spans residues 83-106 (KVIPYIISQMLGAFFAAALVYALY). Over 107–141 (RNVFIDYETVHNIVRGTQESLSLAGTFSTYPHPSL) the chain is Periplasmic. Residues 142–167 (SIGGAFAVEFVITAILMALIMALTDD) traverse the membrane as a helical segment. At 168 to 175 (GNGVPRGP) the chain is on the cytoplasmic side. A helical transmembrane segment spans residues 176-192 (LAPLLIGILIAVIGGAM). The Periplasmic segment spans residues 193-196 (GPLT). An intramembrane segment occupies 197 to 200 (GFAM). The short motif at 201-203 (NPA) is the NPA 2 element. Positions 201–214 (NPARDFGPKFFAYL) form an intramembrane region, helical. Residues 215 to 229 (AGWGELALTGGREIP) lie on the Periplasmic side of the membrane. The chain crosses the membrane as a helical span at residues 230-252 (YFIVPMVAPVLGALAGAWLYKKA). Residues 253–264 (IGGNLPCNCGCE) are Cytoplasmic-facing.

The protein belongs to the MIP/aquaporin (TC 1.A.8) family.

The protein resides in the cell inner membrane. It catalyses the reaction glycerol(in) = glycerol(out). Mediates glycerol diffusion across the cytoplasmic membrane via a pore-type mechanism. This is Glycerol uptake facilitator protein (glpF) from Haemophilus influenzae (strain ATCC 51907 / DSM 11121 / KW20 / Rd).